Here is a 338-residue protein sequence, read N- to C-terminus: RNA 3'-terminal phosphate cyclase (338 aa).

ATP contacts are provided by residues glutamine 103 and tyrosine 283–glutamine 287. The active-site Tele-AMP-histidine intermediate is the histidine 308.

The protein belongs to the RNA 3'-terminal cyclase family. Type 1 subfamily.

It localises to the cytoplasm. The enzyme catalyses a 3'-end 3'-phospho-ribonucleotide-RNA + ATP = a 3'-end 2',3'-cyclophospho-ribonucleotide-RNA + AMP + diphosphate. Its function is as follows. Catalyzes the conversion of 3'-phosphate to a 2',3'-cyclic phosphodiester at the end of RNA. The mechanism of action of the enzyme occurs in 3 steps: (A) adenylation of the enzyme by ATP; (B) transfer of adenylate to an RNA-N3'P to produce RNA-N3'PP5'A; (C) and attack of the adjacent 2'-hydroxyl on the 3'-phosphorus in the diester linkage to produce the cyclic end product. The biological role of this enzyme is unknown but it is likely to function in some aspects of cellular RNA processing. This chain is RNA 3'-terminal phosphate cyclase, found in Shigella boydii serotype 18 (strain CDC 3083-94 / BS512).